We begin with the raw amino-acid sequence, 713 residues long: Polyribonucleotide nucleotidyltransferase (713 aa).

Residues D488 and D494 each contribute to the Mg(2+) site. The region spanning 555-614 (PQMEIIKVPTDKIRDVIGSGGKVIRGIVDETGAKVNIDDDGTVQISAMDRKSIDAAIKMI) is the KH domain. One can recognise an S1 motif domain in the interval 624 to 692 (GEIYEGKVVS…ERGKVRLSMK (69 aa)).

It belongs to the polyribonucleotide nucleotidyltransferase family. It depends on Mg(2+) as a cofactor.

The protein localises to the cytoplasm. The catalysed reaction is RNA(n+1) + phosphate = RNA(n) + a ribonucleoside 5'-diphosphate. Functionally, involved in mRNA degradation. Catalyzes the phosphorolysis of single-stranded polyribonucleotides processively in the 3'- to 5'-direction. The protein is Polyribonucleotide nucleotidyltransferase of Hyphomonas neptunium (strain ATCC 15444).